We begin with the raw amino-acid sequence, 334 residues long: Phosphoribosylformylglycinamidine cyclo-ligase (334 aa).

The protein belongs to the AIR synthase family.

The protein localises to the cytoplasm. It catalyses the reaction 2-formamido-N(1)-(5-O-phospho-beta-D-ribosyl)acetamidine + ATP = 5-amino-1-(5-phospho-beta-D-ribosyl)imidazole + ADP + phosphate + H(+). The protein operates within purine metabolism; IMP biosynthesis via de novo pathway; 5-amino-1-(5-phospho-D-ribosyl)imidazole from N(2)-formyl-N(1)-(5-phospho-D-ribosyl)glycinamide: step 2/2. The protein is Phosphoribosylformylglycinamidine cyclo-ligase of Pyrococcus horikoshii (strain ATCC 700860 / DSM 12428 / JCM 9974 / NBRC 100139 / OT-3).